Reading from the N-terminus, the 328-residue chain is GMP reductase (328 aa).

The active-site Thioimidate intermediate is cysteine 176. An NADP(+)-binding site is contributed by 205 to 228 (IIADGGIRTHGDIAKSIRFGASMI).

This sequence belongs to the IMPDH/GMPR family. GuaC type 2 subfamily.

It catalyses the reaction IMP + NH4(+) + NADP(+) = GMP + NADPH + 2 H(+). Catalyzes the irreversible NADPH-dependent deamination of GMP to IMP. It functions in the conversion of nucleobase, nucleoside and nucleotide derivatives of G to A nucleotides, and in maintaining the intracellular balance of A and G nucleotides. This is GMP reductase from Streptococcus pneumoniae serotype 2 (strain D39 / NCTC 7466).